The following is a 362-amino-acid chain: N-acylethanolamine-hydrolyzing acid amidase (362 aa).

The first 33 residues, 1–33 (MGTPAIRAACHGAHLALALLLLLSLSDPWLWAT), serve as a signal peptide directing secretion. Residues asparagine 42 and asparagine 112 are each glycosylated (N-linked (GlcNAc...) asparagine). The active-site Nucleophile is cysteine 131. Residues asparagine 314 and asparagine 338 are each glycosylated (N-linked (GlcNAc...) asparagine).

This sequence belongs to the acid ceramidase family. In terms of assembly, heterodimer of an alpha and a beta subunit, produced by autocatalytic cleavage. Post-translationally, N-glycosylated. Tunicamycin treatment causes a reduction in specific activity against N-palmitoylethanolamine. Autoproteolytic cleavage at pH 4.5 gives rise to the alpha and beta subunit. Cleavage gives rise to a conformation change that activates the enzyme. The same catalytic Cys residue mediates the autoproteolytic cleavage and subsequent hydrolysis of lipid substrates. Expressed in brain, cecum, colon, heart, ileum, kidney, liver, lung, spleen, stomach, submaxillary gland, testis and thymus.

Its subcellular location is the lysosome. It is found in the membrane. The catalysed reaction is N-hexadecanoylethanolamine + H2O = ethanolamine + hexadecanoate. The enzyme catalyses an N-(long-chain fatty acyl)ethanolamine + H2O = a long-chain fatty acid + ethanolamine. It catalyses the reaction N-dodecanoylethanolamine + H2O = dodecanoate + ethanolamine. It carries out the reaction N-tetradecanoylethanolamine + H2O = tetradecanoate + ethanolamine. The catalysed reaction is an N-acylsphing-4-enine + H2O = sphing-4-enine + a fatty acid. The enzyme catalyses N-hexadecanoylsphing-4-enine + H2O = sphing-4-enine + hexadecanoate. It catalyses the reaction N-dodecanoylsphing-4-enine + H2O = dodecanoate + sphing-4-enine. It functions in the pathway lipid metabolism; fatty acid metabolism. With respect to regulation, stimulated by DTT. Stimulated by nonionic detergent of the polyoxyethylenep-t-octylphenylether type (Triton X-100 or Nonidet P-40) whereas 3-[(3-cholamidopropyl)dimethylammonio]propane-1-sulfonate (CHAPS) and octyl alpha-D-glucopyranoside decrease the N-(long-chain-acyl)ethanolamine deacylase activity. Polysorbate 20 (Tween 20) is inhibitory. Stimulated by endogenous phospholipids such as choline- or ethanolamine-containing phospholipids, and dihydrolipoic acid. In terms of biological role, degrades bioactive fatty acid amides to their corresponding acids, with the following preference: N-palmitoylethanolamine &gt; N-myristoylethanolamine &gt; N-stearoylethanolamine &gt; N-oleoylethanolamine &gt; N-linoleoylethanolamine &gt; N-arachidonoylethanolamine. In Rattus norvegicus (Rat), this protein is N-acylethanolamine-hydrolyzing acid amidase.